The chain runs to 447 residues: Tubulin beta-1 chain (447 aa).

GTP-binding residues include Gln11, Glu69, Ser138, Gly142, Thr143, Gly144, Asn204, and Asn226. A Mg(2+)-binding site is contributed by Glu69. Residues 427–447 (EATADEDAEFEEEQEAEVEEN) are disordered. Over residues 429–447 (TADEDAEFEEEQEAEVEEN) the composition is skewed to acidic residues.

Belongs to the tubulin family. Dimer of alpha and beta chains. A typical microtubule is a hollow water-filled tube with an outer diameter of 25 nm and an inner diameter of 15 nM. Alpha-beta heterodimers associate head-to-tail to form protofilaments running lengthwise along the microtubule wall with the beta-tubulin subunit facing the microtubule plus end conferring a structural polarity. Microtubules usually have 13 protofilaments but different protofilament numbers can be found in some organisms and specialized cells. Requires Mg(2+) as cofactor.

The protein localises to the cytoplasm. It is found in the cytoskeleton. Tubulin is the major constituent of microtubules, a cylinder consisting of laterally associated linear protofilaments composed of alpha- and beta-tubulin heterodimers. Microtubules grow by the addition of GTP-tubulin dimers to the microtubule end, where a stabilizing cap forms. Below the cap, tubulin dimers are in GDP-bound state, owing to GTPase activity of alpha-tubulin. The protein is Tubulin beta-1 chain of Glossina morsitans morsitans (Savannah tsetse fly).